We begin with the raw amino-acid sequence, 190 residues long: Large ribosomal subunit protein uL5 (190 aa).

The protein belongs to the universal ribosomal protein uL5 family. Part of the 50S ribosomal subunit; part of the 5S rRNA/L5/L18/L25 subcomplex. Contacts the 5S rRNA and the P site tRNA. Forms a bridge to the 30S subunit in the 70S ribosome.

Functionally, this is one of the proteins that bind and probably mediate the attachment of the 5S RNA into the large ribosomal subunit, where it forms part of the central protuberance. In the 70S ribosome it contacts protein S13 of the 30S subunit (bridge B1b), connecting the 2 subunits; this bridge is implicated in subunit movement. Contacts the P site tRNA; the 5S rRNA and some of its associated proteins might help stabilize positioning of ribosome-bound tRNAs. The sequence is that of Large ribosomal subunit protein uL5 from Bifidobacterium adolescentis (strain ATCC 15703 / DSM 20083 / NCTC 11814 / E194a).